We begin with the raw amino-acid sequence, 151 residues long: Large ribosomal subunit protein uL22 (151 aa).

This sequence belongs to the universal ribosomal protein uL22 family. In terms of assembly, part of the 50S ribosomal subunit.

Its function is as follows. This protein binds specifically to 23S rRNA. It makes multiple contacts with different domains of the 23S rRNA in the assembled 50S subunit and ribosome. Functionally, the globular domain of the protein is located near the polypeptide exit tunnel on the outside of the subunit, while an extended beta-hairpin is found that lines the wall of the exit tunnel in the center of the 70S ribosome. This is Large ribosomal subunit protein uL22 from Methanococcoides burtonii (strain DSM 6242 / NBRC 107633 / OCM 468 / ACE-M).